The primary structure comprises 334 residues: 3-dehydroquinate synthase (334 aa).

The protein belongs to the archaeal-type DHQ synthase family.

The enzyme catalyses 2-amino-2,3,7-trideoxy-D-lyxo-hept-6-ulosonate + NAD(+) + H2O = 3-dehydroquinate + NH4(+) + NADH + H(+). Functionally, catalyzes the oxidative deamination and cyclization of 2-amino-3,7-dideoxy-D-threo-hept-6-ulosonic acid (ADH) to yield 3-dehydroquinate (DHQ), which is fed into the canonical shikimic pathway of aromatic amino acid biosynthesis. In Korarchaeum cryptofilum (strain OPF8), this protein is 3-dehydroquinate synthase.